Consider the following 203-residue polypeptide: uncharacterized protein (203 aa).

The tract at residues 117-138 (SSDPKLKQPSNCLNDQTNNDSA) is disordered. Residues 124–138 (QPSNCLNDQTNNDSA) are compositionally biased toward polar residues.

The protein localises to the cytoplasm. It is found in the nucleus. This is an uncharacterized protein from Schizosaccharomyces pombe (strain 972 / ATCC 24843) (Fission yeast).